We begin with the raw amino-acid sequence, 59 residues long: Putative potassium channel toxin Ts24 (59 aa).

A signal peptide spans 1–22; the sequence is MKAFYGILIIFILISMIHLSQQ. Cystine bridges form between Cys-29–Cys-50, Cys-35–Cys-55, and Cys-39–Cys-57.

It belongs to the short scorpion toxin superfamily. Potassium channel inhibitor family. Alpha-KTx 04 subfamily. As to expression, expressed by the venom gland.

It is found in the secreted. Potently blocks Kv1.1/KCNA1 (85%), Kv1.2/KCNA2 (91%), Kv1.3/KCNA3 (89%), Kv1.6/KCNA6 (94%), and Shaker (97%). This chain is Putative potassium channel toxin Ts24, found in Tityus serrulatus (Brazilian scorpion).